The chain runs to 276 residues: NAD kinase (276 aa).

Asp-61 acts as the Proton acceptor in catalysis. NAD(+)-binding positions include 61–62 (DG), Arg-66, 135–136 (NE), Arg-146, His-163, Asp-165, and Ala-200.

It belongs to the NAD kinase family. Requires a divalent metal cation as cofactor.

The protein localises to the cytoplasm. The enzyme catalyses NAD(+) + ATP = ADP + NADP(+) + H(+). Functionally, involved in the regulation of the intracellular balance of NAD and NADP, and is a key enzyme in the biosynthesis of NADP. Catalyzes specifically the phosphorylation on 2'-hydroxyl of the adenosine moiety of NAD to yield NADP. The polypeptide is NAD kinase (Chloroflexus aggregans (strain MD-66 / DSM 9485)).